The chain runs to 138 residues: Transmembrane protein 170A (138 aa).

Residues Met-1–Val-44 lie on the Lumenal side of the membrane. N-linked (GlcNAc...) asparagine glycosylation occurs at Asn-26. The chain crosses the membrane as a helical span at residues Phe-45–Phe-65. Residues Thr-66 to Ser-79 are Cytoplasmic-facing. Residues Leu-80–Ala-100 traverse the membrane as a helical segment. The Lumenal segment spans residues Gly-101 to Met-110. A helical transmembrane segment spans residues Ile-111 to Phe-131. Residues Leu-132–Leu-138 lie on the Cytoplasmic side of the membrane.

This sequence belongs to the TMEM170 family.

It localises to the endoplasmic reticulum membrane. Its subcellular location is the nucleus envelope. Functionally, may regulate membrane morphogenesis in the endoplasmic reticulum (ER) by promoting ER sheet formation at the expense of ER tubules. The protein is Transmembrane protein 170A (TMEM170A) of Gallus gallus (Chicken).